A 355-amino-acid polypeptide reads, in one-letter code: Sesquiterpene synthase-like protein Agr11 (355 aa).

It belongs to the terpene synthase family.

This Cyclocybe aegerita (Black poplar mushroom) protein is Sesquiterpene synthase-like protein Agr11.